The sequence spans 251 residues: uncharacterized protein (251 aa).

It localises to the mitochondrion. This is an uncharacterized protein from Arabidopsis thaliana (Mouse-ear cress).